A 110-amino-acid chain; its full sequence is MKSKVEILPSTLIYHELIGLEIQVIRSTNPALIGIRGRVIDETKNLLIIENSGPRELKIPKADSEFLFRIPTELSEKGRRSDTFVKIQGNLLLSQPENRIKNIKKLRKWG.

The protein belongs to the eukaryotic/archaeal RNase P protein component 1 family. As to quaternary structure, consists of a catalytic RNA component and at least 4-5 protein subunits.

The protein localises to the cytoplasm. It carries out the reaction Endonucleolytic cleavage of RNA, removing 5'-extranucleotides from tRNA precursor.. Part of ribonuclease P, a protein complex that generates mature tRNA molecules by cleaving their 5'-ends. This Methanosarcina barkeri (strain Fusaro / DSM 804) protein is Ribonuclease P protein component 1.